Here is a 621-residue protein sequence, read N- to C-terminus: Laccase-2 (621 aa).

Residues Met1–Ala23 form the signal peptide. The propeptide occupies Ala24–Ser48. Cys49 and Cys57 form a disulfide bridge. Plastocyanin-like domains lie at Thr78–Asn201 and Ile210–Asn367. Asn133 is a glycosylation site (N-linked (GlcNAc...) asparagine). Positions 138, 140, 183, and 185 each coordinate Cu cation. 2 disulfides stabilise this stretch: Cys159–Cys586 and Cys343–Cys377. Asn261, Asn276, Asn289, Asn325, and Asn334 each carry an N-linked (GlcNAc...) asparagine glycan. Residues Asn401, Asn421, and Asn441 are each glycosylated (N-linked (GlcNAc...) asparagine). The Plastocyanin-like 3 domain occupies Asp430–Arg566. Positions 476, 479, 481, 548, 549, 550, and 554 each coordinate Cu cation. Positions Lys606–Asn621 are excised as a propeptide.

Belongs to the multicopper oxidase family. In terms of assembly, monomer. The cofactor is Cu cation. Proteolytically processed at both its N-terminus and its C-terminus.

The protein localises to the secreted. It carries out the reaction 4 hydroquinone + O2 = 4 benzosemiquinone + 2 H2O. Functionally, probably involved in lignin degradation and in the detoxification of lignin-derived products in its natural habitat (herbivorous dung), which is rich in lignin of grasses and straw. Probably involved in melanin synthesis and in perithecia development. The sequence is that of Laccase-2 (LAC2) from Podospora anserina (Pleurage anserina).